A 66-amino-acid polypeptide reads, in one-letter code: Large ribosomal subunit protein bL33c (66 aa).

Belongs to the bacterial ribosomal protein bL33 family.

The protein localises to the plastid. The protein resides in the chloroplast. The sequence is that of Large ribosomal subunit protein bL33c from Nicotiana sylvestris (Wood tobacco).